The sequence spans 527 residues: Glutamate--cysteine ligase (527 aa).

Belongs to the glutamate--cysteine ligase type 1 family. Type 1 subfamily.

It catalyses the reaction L-cysteine + L-glutamate + ATP = gamma-L-glutamyl-L-cysteine + ADP + phosphate + H(+). Its pathway is sulfur metabolism; glutathione biosynthesis; glutathione from L-cysteine and L-glutamate: step 1/2. This chain is Glutamate--cysteine ligase, found in Bordetella petrii (strain ATCC BAA-461 / DSM 12804 / CCUG 43448).